Here is a 629-residue protein sequence, read N- to C-terminus: UvrABC system protein C (629 aa).

A GIY-YIG domain is found at 26 to 105; that stretch reads TSPGIYQFKN…IKELKPRYNV (80 aa). The 36-residue stretch at 219-254 folds into the UVR domain; sequence SALIRSLTENMHLAATELRFEQAAEIKAQIESLKRY.

The protein belongs to the UvrC family. Interacts with UvrB in an incision complex.

The protein localises to the cytoplasm. In terms of biological role, the UvrABC repair system catalyzes the recognition and processing of DNA lesions. UvrC both incises the 5' and 3' sides of the lesion. The N-terminal half is responsible for the 3' incision and the C-terminal half is responsible for the 5' incision. This is UvrABC system protein C from Chlorobium chlorochromatii (strain CaD3).